A 1415-amino-acid polypeptide reads, in one-letter code: MAHGEPYYSSKPDKDFNFGSTMARRQMTPTMVAKLPNFVRNSPQAYDWIVRGLIFPTTGKTYFQRVVVITGGLEDGTYGSFVFDGREWVEIYPIEHLNLMSSLKLIHKANALQERLRLSQEEKATLALDVQFLQHENVRLKELIPKPEPRKIQMKWIIVGAVLTFLSLIPGGYAQSQINNTIFTDMIAACKYSTETLTENLDLRIKLALANITISDKLDAVRQILNFAFVPRAHWLRTVFYYIHYYEMWNIFMFVLAIGTVMRSARPGTDLITLATSHLSGFRMAVLPTIPFHTTMTLWVMNTLMVCYYFDNLLAITLAILAPILGIIFLCFMEDSNYVSQIRGLIATAVLIAGGHACLTLTGTTTSLFVVILTCRFIRMATVFIGTRFEIRDANGKVVATVPTRIKNVAFDFFQKLKQSGVRVGVNEFVVIKPGALCVIDTPEGKGTGFFSGNDIVTAAHAVGNNTFVNVCYEGLMYEAKVRYMPEKDIAFITCPGDLHPTARLKLSKNPDYSCVTVMAYVNEDLVVSTAAAMVHGNTLSYAVRTQDGMSGAPVCDKYGRVLAVHQTNTGYTGGAVIIDPTDFHPVKAPSRVELLKEEIERLKAQLNSAAENPATAVTQQPVVTLEQKSVSDSDVVDLVRTAMEREMKVLRDEINGILAPFLQKKKGKTKHGRGRVRRNLRKGVKLLTEEEYRELLEKGLDRETFLDLIDRIIGERSGYPDYDDEDYYDEDDDGWGVVGDDVEFDYTEVINFDQAKPTPAPRTVKPKTCPEPEAETQPLDLSQKKEKQLEHEQQVVKSTKPQKNEPQPYSQTYGKAPIWESYDFDWDEDDAKFILPAPHRLTKADEIVLGSKIVKLRTIIETAIKTQNYSALPEAVFELDKAAYEAGLEGFLQRVKSKKGSKKLQRAPEDQGAQNYHSLDAWKSLLEPPRERRCVPANFPLLGHLPINRPIFDDKKPRDDLLGLLPEPTWHAFEEYGPTTWGPQAFIKSFDKFFYAEPIDFFSEYPQLCAFADWATYREFRYLEDTRVIHITATEKNTDSTPAYPKMNYFDTEENYLEAHGWAPYIREFTRVFKGDKPEVLWYLFLKKEIIKEEKIRNSDIRQIVCADPIYTRIGACLEAHQNALMKQHTDTSVGQCGWSPMEGGFKKTMQRLVNKGNKHFIEFDWTRYDGTIPPALFKHIKEIRWNFINKDQREKYKHVHEWYVDNLLNRHVLLPSGEVTLQTRGNPSGQFSTTMDNNMVNFWSQAFEFAYFNGPDKDLWKTYDTVVYGDDRLSTTPSVPDDYEERVINMYRDIFGMWVKPGKVICRDSIVGLSFCGFTVNENLEPVPTSPEKLMASLLKPYKILPDLESLHGKLLCYQLLAAFMAEDHPFKVYVEHCLSRTAKQLRDSGLPARLTEEQLHRIWRGGPKKCDG.

Residues 104–142 (KLIHKANALQERLRLSQEEKATLALDVQFLQHENVRLKE) adopt a coiled-coil conformation. The next 5 helical transmembrane spans lie at 154–174 (MKWI…GGYA), 239–259 (VFYY…LAIG), 286–306 (VLPT…TLMV), 313–333 (LLAI…LCFM), and 344–364 (GLIA…LTGT). Residues histidine 461, aspartate 489, and serine 551 each act as charge relay system; for serine protease activity in the active site. Residues 587 to 616 (VKAPSRVELLKEEIERLKAQLNSAAENPAT) are a coiled coil. Tyrosine 693 is modified (O-(5'-phospho-RNA)-tyrosine). The interval 753-813 (FDQAKPTPAP…KNEPQPYSQT (61 aa)) is disordered. The segment covering 783–795 (SQKKEKQLEHEQQ) has biased composition (basic and acidic residues). Polar residues predominate over residues 800-813 (TKPQKNEPQPYSQT). Residues 1160-1286 (KHFIEFDWTR…TTPSVPDDYE (127 aa)) form the RdRp catalytic domain.

Belongs to the astroviridae polyprotein 1AB family. In terms of assembly, monomer. Cleaved by the viral and host proteases. The protease is probably autocatalytically cleaved.

It localises to the host membrane. It carries out the reaction RNA(n) + a ribonucleoside 5'-triphosphate = RNA(n+1) + diphosphate. Its function is as follows. Responsible for the cleavage of the polyprotein into functional products. Covalently attached to the 5' extremity of the genomic and subgenomic RNAs. It may serve as a primer for the replicase. This Human astrovirus-4 (HAstV-4) protein is Non-structural polyprotein 1AB (ORF1).